A 674-amino-acid chain; its full sequence is Inorganic pyrophosphatase TTM2 (674 aa).

The region spanning 248-410 (SPTYILKSRK…PRTYIEQIQL (163 aa)) is the CYTH domain. Disordered regions lie at residues 457–498 (KNLK…SPAN) and 619–640 (RSRL…SKSS). Basic and acidic residues predominate over residues 484–496 (SDRRYEERNHDSP). Positions 623–640 (ARTGSSNSGNRGRSSKSS) are enriched in low complexity. The chain crosses the membrane as a helical span at residues 650–670 (LPLVLTVAICSIGIIVIKSYI).

Mg(2+) serves as cofactor. Predominantly expressed in the shoot apices of inflorescences.

The protein resides in the mitochondrion outer membrane. The catalysed reaction is diphosphate + H2O = 2 phosphate + H(+). Functionally, exhibits pyrophosphatase activity with stronger affinity for pyrophosphate (PPi), moderate affinity for ATP and ADP, and weak affinity for tripolyphosphate (PPPi). No activity observed toward uridine substrate. Negative regulator of the salicylic acid (SA)-mediated amplification of defense responses against both virulent and avirulent pathogens, including oomycetes (e.g. H.arabidopsidis) and bacteria (e.g. P.syringae). Represses systemic acquired resistance (SAR). The sequence is that of Inorganic pyrophosphatase TTM2 from Arabidopsis thaliana (Mouse-ear cress).